Consider the following 103-residue polypeptide: Small ribosomal subunit protein uS10 (103 aa).

Belongs to the universal ribosomal protein uS10 family. As to quaternary structure, part of the 30S ribosomal subunit.

Its function is as follows. Involved in the binding of tRNA to the ribosomes. This chain is Small ribosomal subunit protein uS10, found in Mycoplasmopsis pulmonis (strain UAB CTIP) (Mycoplasma pulmonis).